The primary structure comprises 359 residues: Leafy/floricaula homolog FL1 (359 aa).

The segment at 113–170 (SEEQVVQHSEKDQLGRAGSGDTAGTSWGAQQQRKKHRHRHHITAMKGAATEEDEEDEE) is disordered. Basic residues predominate over residues 144–155 (QRKKHRHRHHIT). 3 DNA-binding regions span residues 179-183 (REHPF), 248-255 (NKPKMRHY), and 320-323 (YVPT). The segment covering 340-352 (ASSASTSTSAPTA) has biased composition (low complexity). The interval 340-359 (ASSASTSTSAPTAHHLELPY) is disordered.

The protein belongs to the FLO/LFY family. In terms of tissue distribution, expressed strongly in the early floral primordium and then successively in the primordia of sepals, petals, stamens and carpels. Also in the leaf primordia and young leaves.

The protein resides in the nucleus. Its function is as follows. Probable transcription factor. The protein is Leafy/floricaula homolog FL1 (LF1) of Eucalyptus globulus (Tasmanian blue gum).